Reading from the N-terminus, the 37-residue chain is Delta-amaurobitoxin-Pl1a (37 aa).

4 disulfides stabilise this stretch: C2/C18, C9/C23, C17/C33, and C25/C31. The residue at position 37 (S37) is a Serine amide.

It belongs to the neurotoxin 07 (Beta/delta-agtx) family. 02 (aga-3) subfamily. In terms of tissue distribution, expressed by the venom gland.

The protein resides in the secreted. Functionally, binds at site 4 of sodium channels (Nav) and inhibits the fast inactivation of cockroach channels. This toxin is active only on insects. Has a potent activity against S.litura larvae. The chain is Delta-amaurobitoxin-Pl1a from Pireneitega luctuosa (Tangled nest spider).